Reading from the N-terminus, the 495-residue chain is MEIRKLSLSTIRSIITSLSVLVLVISASATLVRSTPPNVLEQVLASGELRVISTNGATTFYEGSDGLTGFEYSLLKGFADSLGVNLAIENQADTRELLHAVEQRQYHMGSAELTALESQDYHLSFAKPYMQITQQLVYNHRLGTPTSIKDLKGKEVLILADSAHSKRVARLQKKFPNLTWRPIENGQMIDLLEMVHKGEADYAVIDSNAYELHRYSYPRAKLAFDISNPQPLAWAFPHSKDTSLFDAAQRYMAQIKRDGSLAQVTKHFFERHIDEVTTGEAMVFAYRLQNRFPQWSDAMKSAATEFDLDWQMLAAIGYQESHWLADAESHTGVRGLMMLTKRTARAMGVNNREDPLQSIYGGAKYFRMMLDRLPERIQGDDRLNLALAAYNQGAGHLEDARVLTQRMGGNPDKWEDVRKYMPLLSKSQYYSRAKHGYMRGWEPVQFVDNVRNYHKIIAWHEQQNELRLASYSGGALSSLHKAPTETAAQGENLSL.

A signal peptide spans M1–A29. Residues T30 to I273 are non-LT domain. Residues D274–L495 are LT domain. Residue E320 is part of the active site.

This sequence in the N-terminal section; belongs to the bacterial solute-binding protein 3 family. In the C-terminal section; belongs to the transglycosylase Slt family.

It is found in the cell outer membrane. It carries out the reaction Exolytic cleavage of the (1-&gt;4)-beta-glycosidic linkage between N-acetylmuramic acid (MurNAc) and N-acetylglucosamine (GlcNAc) residues in peptidoglycan, from either the reducing or the non-reducing ends of the peptidoglycan chains, with concomitant formation of a 1,6-anhydrobond in the MurNAc residue.. In terms of biological role, murein-degrading enzyme that degrades murein glycan strands and insoluble, high-molecular weight murein sacculi, with the concomitant formation of a 1,6-anhydromuramoyl product. Lytic transglycosylases (LTs) play an integral role in the metabolism of the peptidoglycan (PG) sacculus. Their lytic action creates space within the PG sacculus to allow for its expansion as well as for the insertion of various structures such as secretion systems and flagella. In Cellvibrio japonicus (strain Ueda107) (Pseudomonas fluorescens subsp. cellulosa), this protein is Membrane-bound lytic murein transglycosylase F.